The primary structure comprises 38 residues: Photosystem I reaction center subunit VIII (38 aa).

Residues 12–32 (WILIPIIGWLMPAVVMGLLFL) traverse the membrane as a helical segment.

Belongs to the PsaI family.

It is found in the cellular thylakoid membrane. Functionally, may help in the organization of the PsaL subunit. The chain is Photosystem I reaction center subunit VIII from Gloeothece citriformis (strain PCC 7424) (Cyanothece sp. (strain PCC 7424)).